The following is a 548-amino-acid chain: Membrane protein insertase YidC (548 aa).

Residues Asn-6–Asp-26 traverse the membrane as a helical segment. The segment at Asn-28–Ser-55 is disordered. A compositionally biased stretch (low complexity) spans Gln-30–Gln-50. The next 4 membrane-spanning stretches (helical) occupy residues Phe-350–Tyr-370, Leu-420–Leu-440, Leu-458–Ile-478, and Pro-499–Val-519.

Belongs to the OXA1/ALB3/YidC family. Type 1 subfamily. As to quaternary structure, interacts with the Sec translocase complex via SecD. Specifically interacts with transmembrane segments of nascent integral membrane proteins during membrane integration.

The protein resides in the cell inner membrane. Functionally, required for the insertion and/or proper folding and/or complex formation of integral membrane proteins into the membrane. Involved in integration of membrane proteins that insert both dependently and independently of the Sec translocase complex, as well as at least some lipoproteins. Aids folding of multispanning membrane proteins. This Shigella dysenteriae serotype 1 (strain Sd197) protein is Membrane protein insertase YidC.